The following is a 257-amino-acid chain: Global transcriptional regulator CodY (257 aa).

Residues 1 to 155 form a GAF domain region; that stretch reads MSLLSKTREL…AATVIGMEIL (155 aa). The H-T-H motif DNA-binding region spans 203 to 222; sequence ASKVADRVGITRSVIVNALR.

Belongs to the CodY family.

The protein localises to the cytoplasm. In terms of biological role, DNA-binding global transcriptional regulator which is involved in the adaptive response to starvation and acts by directly or indirectly controlling the expression of numerous genes in response to nutrient availability. During rapid exponential growth, CodY is highly active and represses genes whose products allow adaptation to nutrient depletion. In Staphylococcus saprophyticus subsp. saprophyticus (strain ATCC 15305 / DSM 20229 / NCIMB 8711 / NCTC 7292 / S-41), this protein is Global transcriptional regulator CodY.